Reading from the N-terminus, the 318-residue chain is Large ribosomal subunit protein uL10 (318 aa).

Tyr24 carries the phosphotyrosine modification. Phosphothreonine is present on Thr59. Residue Lys264 forms a Glycyl lysine isopeptide (Lys-Gly) (interchain with G-Cter in ubiquitin) linkage. The tract at residues 293 to 318 (TAAPAKVEAKEESEESDEDMGFGLFD) is disordered. Lys298 participates in a covalent cross-link: Glycyl lysine isopeptide (Lys-Gly) (interchain with G-Cter in SUMO1); alternate. Residue Lys298 forms a Glycyl lysine isopeptide (Lys-Gly) (interchain with G-Cter in SUMO2); alternate linkage. Acidic residues predominate over residues 303–312 (EESEESDEDM). Ser305 and Ser308 each carry phosphoserine.

The protein belongs to the universal ribosomal protein uL10 family. In terms of assembly, P0 forms a pentameric complex by interaction with dimers of P1 and P2. Identified in a IGF2BP1-dependent mRNP granule complex containing untranslated mRNAs. Interacts with APEX1. Interacts with FMR1. Ubiquitinated at Lys-264 by RNF14 and RNF25 in response to ribosome collisions (ribosome stalling).

The protein resides in the nucleus. It localises to the cytoplasm. In terms of biological role, ribosomal protein P0 is the functional equivalent of E.coli protein L10. The polypeptide is Large ribosomal subunit protein uL10 (RPLP0) (Bos taurus (Bovine)).